A 39-amino-acid polypeptide reads, in one-letter code: Cytochrome b6-f complex subunit 5 (39 aa).

The helical transmembrane segment at 5-25 (LLCGIVLGLVPITLLGLFVSA) threads the bilayer.

The protein belongs to the PetG family. The 4 large subunits of the cytochrome b6-f complex are cytochrome b6, subunit IV (17 kDa polypeptide, PetD), cytochrome f and the Rieske protein, while the 4 small subunits are PetG, PetL, PetM and PetN. The complex functions as a dimer.

Its subcellular location is the cellular thylakoid membrane. Its function is as follows. Component of the cytochrome b6-f complex, which mediates electron transfer between photosystem II (PSII) and photosystem I (PSI), cyclic electron flow around PSI, and state transitions. PetG is required for either the stability or assembly of the cytochrome b6-f complex. The polypeptide is Cytochrome b6-f complex subunit 5 (Prochlorococcus marinus subsp. pastoris (strain CCMP1986 / NIES-2087 / MED4)).